The primary structure comprises 950 residues: Protein translocase subunit SecA 1 (950 aa).

Residues glutamine 83, 101 to 105 (GEGKT), and aspartate 490 each bind ATP. The segment at 864 to 950 (EGGAGRKNAA…AKPPKSVKKR (87 aa)) is disordered. Over residues 873–888 (AAREEAPSRLRAKGIE) the composition is skewed to basic and acidic residues.

It belongs to the SecA family. In terms of assembly, monomer and homodimer. Part of the essential Sec protein translocation apparatus which comprises SecA, SecYEG and auxiliary proteins SecDF. Other proteins may also be involved.

The protein resides in the cell membrane. It localises to the cytoplasm. The enzyme catalyses ATP + H2O + cellular proteinSide 1 = ADP + phosphate + cellular proteinSide 2.. Functionally, part of the Sec protein translocase complex. Interacts with the SecYEG preprotein conducting channel. Has a central role in coupling the hydrolysis of ATP to the transfer of proteins into and across the cell membrane, serving as an ATP-driven molecular motor driving the stepwise translocation of polypeptide chains across the membrane. This is Protein translocase subunit SecA 1 from Mycobacterium ulcerans (strain Agy99).